A 470-amino-acid chain; its full sequence is MTKKLPDDFIFGGATAAYQAEGATQTDGKGRVAWDTYLEENYWYTAEPASDFYNRYPVDLELSERFGVNGIRISIAWSRIFPKGYGEVNQKGVEYYHNLFKECHKRHVEPFVTLHHFDTPEVLHKDGDFLNRKTIDYFVDYAEFCFKEFPEVKYWTTFNEIGPIGDGQYLVGKFPPGIKYDFEKVFQSHHNMMVAHARAVKLFKDENYKGEIGVVHALPTKYPYDPSNPEDVRAAELEDIIHNKFILDATYLGKYSRETMEGVQHILSVNGGQLEISDEDYKILDEAKDLNDFLGINYYMSDWMRGFEGESEITHNATGDKGGSKYQLKGVGQREFDVDVPRTDWDWMIYPQGLYDQIMRVVKDYPNYHKIYITENGLGYKDVFDEKEKTVHDDARIDYIKQHLSVIADAIADGANVKGYFLWSLMDVFSWSNGYEKRYGLFYVDFETQERFPKKSAYWYKELAESKEIK.

Glutamine 19, histidine 116, asparagine 159, glutamate 160, and asparagine 297 together coordinate D-galactose 6-phosphate. Glutamate 160 functions as the Proton donor in the catalytic mechanism. Residue glutamate 375 is the Nucleophile of the active site. D-galactose 6-phosphate-binding residues include serine 430, tryptophan 431, lysine 437, and tyrosine 439.

The protein belongs to the glycosyl hydrolase 1 family.

It catalyses the reaction a 6-phospho-beta-D-galactoside + H2O = D-galactose 6-phosphate + an alcohol. The protein operates within carbohydrate metabolism; lactose degradation; D-galactose 6-phosphate and beta-D-glucose from lactose 6-phosphate: step 1/1. The chain is 6-phospho-beta-galactosidase from Staphylococcus epidermidis (strain ATCC 35984 / DSM 28319 / BCRC 17069 / CCUG 31568 / BM 3577 / RP62A).